The sequence spans 144 residues: Putative protein PHLOEM PROTEIN 2-LIKE B4 (144 aa).

The sequence is that of Putative protein PHLOEM PROTEIN 2-LIKE B4 (PP2B4) from Arabidopsis thaliana (Mouse-ear cress).